The primary structure comprises 492 residues: Catalase isozyme 2 (492 aa).

Catalysis depends on residues His-65 and Asn-138. Tyr-347 lines the heme pocket.

It belongs to the catalase family. In terms of assembly, homotetramer. Heme serves as cofactor. As to expression, high levels in green cotyledons, mature leaf, stem and green hypocotyl.

Its subcellular location is the peroxisome. The enzyme catalyses 2 H2O2 = O2 + 2 H2O. In terms of biological role, occurs in almost all aerobically respiring organisms and serves to protect cells from the toxic effects of hydrogen peroxide. The sequence is that of Catalase isozyme 2 (CAT2) from Cucurbita pepo (Vegetable marrow).